Here is a 332-residue protein sequence, read N- to C-terminus: Biotin synthase (332 aa).

The Radical SAM core domain occupies 52–282 (FPENEVEFCS…KAELRLCGGR (231 aa)). [4Fe-4S] cluster is bound by residues Cys-70, Cys-74, and Cys-77. 4 residues coordinate [2Fe-2S] cluster: Cys-114, Cys-147, Cys-207, and Arg-277.

The protein belongs to the radical SAM superfamily. Biotin synthase family. As to quaternary structure, homodimer. [4Fe-4S] cluster serves as cofactor. Requires [2Fe-2S] cluster as cofactor.

The enzyme catalyses (4R,5S)-dethiobiotin + (sulfur carrier)-SH + 2 reduced [2Fe-2S]-[ferredoxin] + 2 S-adenosyl-L-methionine = (sulfur carrier)-H + biotin + 2 5'-deoxyadenosine + 2 L-methionine + 2 oxidized [2Fe-2S]-[ferredoxin]. It functions in the pathway cofactor biosynthesis; biotin biosynthesis; biotin from 7,8-diaminononanoate: step 2/2. Catalyzes the conversion of dethiobiotin (DTB) to biotin by the insertion of a sulfur atom into dethiobiotin via a radical-based mechanism. The polypeptide is Biotin synthase (Aquifex aeolicus (strain VF5)).